The sequence spans 121 residues: Large ribosomal subunit protein uL22 (121 aa).

This sequence belongs to the universal ribosomal protein uL22 family. Part of the 50S ribosomal subunit.

In terms of biological role, this protein binds specifically to 23S rRNA; its binding is stimulated by other ribosomal proteins, e.g. L4, L17, and L20. It is important during the early stages of 50S assembly. It makes multiple contacts with different domains of the 23S rRNA in the assembled 50S subunit and ribosome. Its function is as follows. The globular domain of the protein is located near the polypeptide exit tunnel on the outside of the subunit, while an extended beta-hairpin is found that lines the wall of the exit tunnel in the center of the 70S ribosome. The chain is Large ribosomal subunit protein uL22 from Paenarthrobacter aurescens (strain TC1).